We begin with the raw amino-acid sequence, 505 residues long: MADGGKPPTPEKKSWADVEEEEEAKAKAAAAAEAASSSSSNEPAVDAQAKQIEALSLSVPEEHGGSGGGGDDQGPPLLDDSDESQIQAVTSGGTVYESAAAFEDLKLTPELLKGLHDEMGFSRPSKIQAVTLPMILTPPYKDLIAQAHNGSGKTTCFVLGMLSRVDPNRKVTQAICICPTRELAQQNKSVLMRMGKFTGITCACAIPPAQKDYVPIAKMPKITDQVVIGTSGTLMKWINHKKILTNDIKILVFDEADHMLAEDGFRSDSERIMRDIQRSAGGCQVLLFSATFNERVKDFVTRVIKDGNQIFVKKEELTLEKVKQYKVQVPDERAKIAVIKDKIFEFGQKVGQVIIFVRTKQSTKDVHNALTLEDYVCSSIQGSLDQSEREKIIQEFKNGYTKVLISTDVLARGFDQAQVNLVINYDMPIKFGTRDEPDYEVYLHRIGRAGRFGRKGAVFNLLCGETDNTVMRKIETYFQHNVPEVRNWQSEEDFERALKDAGLVE.

Residues 1–81 (MADGGKPPTP…DQGPPLLDDS (81 aa)) form a disordered region. The segment covering 27-44 (KAAAAAEAASSSSSNEPA) has biased composition (low complexity). The Q motif motif lies at 100 to 129 (AAFEDLKLTPELLKGLHDEMGFSRPSKIQA). A Helicase ATP-binding domain is found at 134-310 (MILTPPYKDL…TRVIKDGNQI (177 aa)). 147-154 (AHNGSGKT) serves as a coordination point for ATP. The DEAD box signature appears at 254 to 257 (DEAD). The region spanning 338-493 (VIKDKIFEFG…EVRNWQSEED (156 aa)) is the Helicase C-terminal domain.

It belongs to the DEAD box helicase family. DDX19/DBP5 subfamily.

Its subcellular location is the cytoplasm. The protein resides in the nucleus. The catalysed reaction is ATP + H2O = ADP + phosphate + H(+). Its function is as follows. ATP-dependent RNA helicase essential for mRNA export from the nucleus. Plays an important role in the positive regulation of CBF/DREB transcription factors. This is DEAD-box ATP-dependent RNA helicase 38 from Oryza sativa subsp. japonica (Rice).